A 152-amino-acid chain; its full sequence is Large ribosomal subunit protein bL9 (152 aa).

The protein belongs to the bacterial ribosomal protein bL9 family.

Binds to the 23S rRNA. The polypeptide is Large ribosomal subunit protein bL9 (Picosynechococcus sp. (strain ATCC 27264 / PCC 7002 / PR-6) (Agmenellum quadruplicatum)).